A 329-amino-acid chain; its full sequence is DNA-directed RNA polymerase subunit alpha (329 aa).

Residues 1–235 (MLGSVTDFLK…EQLEAFVDLR (235 aa)) form an alpha N-terminal domain (alpha-NTD) region. An alpha C-terminal domain (alpha-CTD) region spans residues 249–329 (FDPILLRPVD…NWPPASIADE (81 aa)).

Belongs to the RNA polymerase alpha chain family. Homodimer. The RNAP catalytic core consists of 2 alpha, 1 beta, 1 beta' and 1 omega subunit. When a sigma factor is associated with the core the holoenzyme is formed, which can initiate transcription.

It catalyses the reaction RNA(n) + a ribonucleoside 5'-triphosphate = RNA(n+1) + diphosphate. Functionally, DNA-dependent RNA polymerase catalyzes the transcription of DNA into RNA using the four ribonucleoside triphosphates as substrates. This chain is DNA-directed RNA polymerase subunit alpha, found in Aeromonas hydrophila subsp. hydrophila (strain ATCC 7966 / DSM 30187 / BCRC 13018 / CCUG 14551 / JCM 1027 / KCTC 2358 / NCIMB 9240 / NCTC 8049).